The primary structure comprises 392 residues: MAIRLPLICLLGSFMVVAIAADLTPERYWSTALPNTPIPNSLHNLLTFDFTDEKSTNVQVGKGGVNVNTHKGKTGSGTAVNVGKGGVRVDTGKGKPGGGTHVSVGSGKGHGGGVAVHTGKPGKRTDVGVGKGGVTVHTRHKGRPIYVGVKPGANPFVYNYAAKETQLHDDPNAALFFLEKDLVRGKEMNVRFNAEDGYGGKTAFLPRGEAETVPFGSEKFSETLKRFSVEAGSEEAEMMKKTIEECEARKVSGEEKYCATSLESMVDFSVSKLGKYHVRAVSTEVAKKNAPMQKYKIAAAGVKKLSDDKSVVCHKQKYPFAVFYCHKAMMTTVYAVPLEGENGMRAKAVAVCHKNTSAWNPNHLAFKVLKVKPGTVPVCHFLPETHVVWFSY.

The N-terminal stretch at 1-22 (MAIRLPLICLLGSFMVVAIAAD) is a signal peptide. 4 TXV repeats span residues 56–58 (TNV), 78–80 (TAV), 100–102 (THV), and 125–127 (TDV). The 5 X approximate repeats stretch occupies residues 57 to 164 (NVQVGKGGVN…PFVYNYAAKE (108 aa)). The disordered stretch occupies residues 61–136 (GKGGVNVNTH…VGVGKGGVTV (76 aa)). Residues 94-114 (GKPGGGTHVSVGSGKGHGGGV) are compositionally biased toward gly residues. In terms of domain architecture, BURP spans 176-392 (FFLEKDLVRG…PETHVVWFSY (217 aa)).

Expressed in seed. Highest expression in leaves and guard cells.

Acts to suppress chlorophyll degradation under moisture stress. The chain is BURP domain protein RD22 from Arabidopsis thaliana (Mouse-ear cress).